The sequence spans 379 residues: Queuine tRNA-ribosyltransferase (379 aa).

Asp-89 serves as the catalytic Proton acceptor. Substrate is bound by residues 89–93, Asp-143, Gln-187, and Gly-214; that span reads DSGGF. The RNA binding stretch occupies residues 245 to 251; the sequence is GVGKPED. The active-site Nucleophile is the Asp-264. Residues 269-273 form an RNA binding; important for wobble base 34 recognition region; the sequence is TRNAR. Cys-302, Cys-304, Cys-307, and His-333 together coordinate Zn(2+).

This sequence belongs to the queuine tRNA-ribosyltransferase family. As to quaternary structure, homodimer. Within each dimer, one monomer is responsible for RNA recognition and catalysis, while the other monomer binds to the replacement base PreQ1. Requires Zn(2+) as cofactor.

It carries out the reaction 7-aminomethyl-7-carbaguanine + guanosine(34) in tRNA = 7-aminomethyl-7-carbaguanosine(34) in tRNA + guanine. Its pathway is tRNA modification; tRNA-queuosine biosynthesis. Functionally, catalyzes the base-exchange of a guanine (G) residue with the queuine precursor 7-aminomethyl-7-deazaguanine (PreQ1) at position 34 (anticodon wobble position) in tRNAs with GU(N) anticodons (tRNA-Asp, -Asn, -His and -Tyr). Catalysis occurs through a double-displacement mechanism. The nucleophile active site attacks the C1' of nucleotide 34 to detach the guanine base from the RNA, forming a covalent enzyme-RNA intermediate. The proton acceptor active site deprotonates the incoming PreQ1, allowing a nucleophilic attack on the C1' of the ribose to form the product. After dissociation, two additional enzymatic reactions on the tRNA convert PreQ1 to queuine (Q), resulting in the hypermodified nucleoside queuosine (7-(((4,5-cis-dihydroxy-2-cyclopenten-1-yl)amino)methyl)-7-deazaguanosine). The protein is Queuine tRNA-ribosyltransferase of Edwardsiella ictaluri (strain 93-146).